Here is a 467-residue protein sequence, read N- to C-terminus: L-histidine transporter HutT (467 aa).

13 helical membrane passes run 18 to 38, 39 to 59, 71 to 91, 99 to 119, 125 to 145, 155 to 175, 200 to 220, 245 to 265, 280 to 300, 334 to 354, 358 to 378, 402 to 422, and 429 to 449; these read FMAL…SAIQ, MAGP…FMVM, VAGS…GFIL, MVIV…FWFP, IWVL…VKVF, LKVG…AFGF, VGGL…IEII, ILLF…WPQI, GIGS…ISAI, WMTV…NYLI, VFLL…LMIL, FWPY…GVLG, and AALI…LLWC.

Belongs to the amino acid-polyamine-organocation (APC) superfamily. Amino acid transporter (AAT) (TC 2.A.3.1) family.

Its subcellular location is the cell inner membrane. The catalysed reaction is L-histidine(out) + n H(+)(out) = L-histidine(in) + n H(+)(in). Transport activity is inhibited by the proton ionophores carbonyl cyanide m-chlorophenyl hydrazine (CCCP) and 2,4-dinitrophenol (DNP), but not by valinomycin, nigericin and nonactin. Uptake is reduced in the presence of the sulfhydryl reagent N-ethylmaleimide (NEM). Uptake is not affected by arginine, lysine, proline or compounds structurally related to histidine such as imidazole, 3-amino-1,2,4-triazole and urocanate. Only 1,2,4-triazolyl-3-alanine reduces the rate of L-histidine uptake significantly. In terms of biological role, major high-affinity histidine transporter. Binds and catalyzes the uptake of histidine into the cell. Functions as an histidine:proton symporter with high specificity for histidine. In Pseudomonas putida (strain ATCC 47054 / DSM 6125 / CFBP 8728 / NCIMB 11950 / KT2440), this protein is L-histidine transporter HutT.